Reading from the N-terminus, the 142-residue chain is Large ribosomal subunit protein uL11 (142 aa).

Belongs to the universal ribosomal protein uL11 family. As to quaternary structure, part of the ribosomal stalk of the 50S ribosomal subunit. Interacts with L10 and the large rRNA to form the base of the stalk. L10 forms an elongated spine to which L12 dimers bind in a sequential fashion forming a multimeric L10(L12)X complex. In terms of processing, one or more lysine residues are methylated.

Forms part of the ribosomal stalk which helps the ribosome interact with GTP-bound translation factors. The sequence is that of Large ribosomal subunit protein uL11 from Bradyrhizobium sp. (strain ORS 278).